A 310-amino-acid polypeptide reads, in one-letter code: ADP-L-glycero-D-manno-heptose-6-epimerase (310 aa).

NADP(+)-binding positions include F10–I11, D31–N32, K38, K53, E75–S79, and N92. The Proton acceptor role is filled by Y140. Residue K144 participates in NADP(+) binding. Residue N169 coordinates substrate. The NADP(+) site is built by V170 and K178. The active-site Proton acceptor is the K178. Substrate contacts are provided by residues S180, H187, F201–S204, R209, and Y272.

This sequence belongs to the NAD(P)-dependent epimerase/dehydratase family. HldD subfamily. Homopentamer. NADP(+) serves as cofactor.

The enzyme catalyses ADP-D-glycero-beta-D-manno-heptose = ADP-L-glycero-beta-D-manno-heptose. It functions in the pathway nucleotide-sugar biosynthesis; ADP-L-glycero-beta-D-manno-heptose biosynthesis; ADP-L-glycero-beta-D-manno-heptose from D-glycero-beta-D-manno-heptose 7-phosphate: step 4/4. Catalyzes the interconversion between ADP-D-glycero-beta-D-manno-heptose and ADP-L-glycero-beta-D-manno-heptose via an epimerization at carbon 6 of the heptose. In Klebsiella pneumoniae (strain 342), this protein is ADP-L-glycero-D-manno-heptose-6-epimerase.